A 68-amino-acid chain; its full sequence is Neuronal regeneration-related protein (68 aa).

The tract at residues 22–54 (EGRLPKGRLPVPKEVNRKKNDETNAASLTPLGS) is disordered. A compositionally biased stretch (polar residues) spans 44–54 (TNAASLTPLGS). At serine 59 the chain carries Phosphoserine.

Interacts with the latency-associated peptides (LAP) of TGFB1 and TGFB2; the interaction results in a decrease in TGFB autoinduction. Interacts with FLNA. Phosphorylated on Ser-59. Phosphorylation decreases stability and activity. As to expression, expressed in lung (at protein level).

It localises to the cytoplasm. Its function is as follows. May have roles in neural function. Ectopic expression augments motility of gliomas. Also promotes axonal regeneration. May also have functions in cellular differentiation. Induces differentiation of fibroblast into myofibroblast and myofibroblast ameboid migration. Increases retinoic-acid regulation of lipid-droplet biogenesis. Down-regulates the expression of TGFB1 and TGFB2 but not of TGFB3. May play a role in the regulation of alveolar generation. This Homo sapiens (Human) protein is Neuronal regeneration-related protein (NREP).